A 354-amino-acid polypeptide reads, in one-letter code: MDGNKGPVVVTGASGFVGSWLVMKLLQAGYTVRATVRDPANVEKTKPLLELPGAKERLSIWKADLSEDGSFNEAIAGCTGVFHVATPMDFDSQDPENEVIKPTVEGMLSIMRACKEAGTVKRIVFTSSAGSVNIEERPRPAYDQDNWSDIDYCRRVKMTGWMYFVSKALAEKAAMEYASENGLDFISIIPTLVVGPFLSAGMPPSLVTALALITGNEAHYSILKQVQLVHLDDLCDAMTFLFEHPEANGRYICSSHDATIHGLARMLQDRFPEYDIPQKFAGVDDNLQPIHFSSKKLLDHGFSFRYTTEDMFDAAIHTCRDKGLIPLGDVPAPAAGGKLGALAAGEGQAIGAET.

NADP(+)-binding residues include lysine 44 and tyrosine 163.

It belongs to the NAD(P)-dependent epimerase/dehydratase family. Dihydroflavonol-4-reductase subfamily.

The catalysed reaction is a (2R,3S,4S)-leucoanthocyanidin + NADP(+) = a (2R,3R)-dihydroflavonol + NADPH + H(+). The enzyme catalyses (2S)-flavan-4-ol + NADP(+) = (2S)-flavanone + NADPH + H(+). The protein operates within pigment biosynthesis; anthocyanin biosynthesis. Its function is as follows. Bifunctional enzyme involved in flavonoid metabolism. The sequence is that of Dihydroflavonol 4-reductase (ANT18) from Hordeum vulgare (Barley).